The primary structure comprises 112 residues: T cell receptor alpha variable 9-1 (112 aa).

The signal sequence occupies residues 1–20 (MNSSPGPAIALFLMFGGING). The region spanning 21–112 (DSVVQTEGQV…DSAVYFCALS (92 aa)) is the Ig-like domain. Asparagine 41 carries an N-linked (GlcNAc...) asparagine glycan. The cysteines at positions 42 and 109 are disulfide-linked.

As to quaternary structure, alpha-beta TR is a heterodimer composed of an alpha and beta chain; disulfide-linked. The alpha-beta TR is associated with the transmembrane signaling CD3 coreceptor proteins to form the TR-CD3 (TcR or TCR). The assembly of alpha-beta TR heterodimers with CD3 occurs in the endoplasmic reticulum where a single alpha-beta TR heterodimer associates with one CD3D-CD3E heterodimer, one CD3G-CD3E heterodimer and one CD247 homodimer forming a stable octameric structure. CD3D-CD3E and CD3G-CD3E heterodimers preferentially associate with TR alpha and TR beta chains, respectively. The association of the CD247 homodimer is the last step of TcR assembly in the endoplasmic reticulum and is required for transport to the cell surface.

It localises to the cell membrane. In terms of biological role, v region of the variable domain of T cell receptor (TR) alpha chain that participates in the antigen recognition. Alpha-beta T cell receptors are antigen specific receptors which are essential to the immune response and are present on the cell surface of T lymphocytes. Recognize peptide-major histocompatibility (MH) (pMH) complexes that are displayed by antigen presenting cells (APC), a prerequisite for efficient T cell adaptive immunity against pathogens. Binding of alpha-beta TR to pMH complex initiates TR-CD3 clustering on the cell surface and intracellular activation of LCK that phosphorylates the ITAM motifs of CD3G, CD3D, CD3E and CD247 enabling the recruitment of ZAP70. In turn ZAP70 phosphorylates LAT, which recruits numerous signaling molecules to form the LAT signalosome. The LAT signalosome propagates signal branching to three major signaling pathways, the calcium, the mitogen-activated protein kinase (MAPK) kinase and the nuclear factor NF-kappa-B (NF-kB) pathways, leading to the mobilization of transcription factors that are critical for gene expression and essential for T cell growth and differentiation. The T cell repertoire is generated in the thymus, by V-(D)-J rearrangement. This repertoire is then shaped by intrathymic selection events to generate a peripheral T cell pool of self-MH restricted, non-autoaggressive T cells. Post-thymic interaction of alpha-beta TR with the pMH complexes shapes TR structural and functional avidity. The polypeptide is T cell receptor alpha variable 9-1 (Homo sapiens (Human)).